The chain runs to 397 residues: Translocase of chloroplast 34 homolog, chloroplastic (397 aa).

A disordered region spans residues methionine 1–leucine 72. Composition is skewed to acidic residues over residues glutamate 10–serine 32 and alanine 44–serine 63. The 232-residue stretch at arginine 90–lysine 321 folds into the AIG1-type G domain. The G1 stretch occupies residues glycine 99–serine 106. Residues serine 102–serine 107 and glutamine 121–glutamine 126 each bind GTP. Serine 106 provides a ligand contact to Mg(2+). The segment at glutamine 121–lysine 124 is homodimerization. Residues glutamine 126 to aspartate 130 are G2. The interval aspartate 155–glycine 158 is G3. Residues arginine 193 to arginine 198 are homodimerization. Residues threonine 227–asparagine 230 are G4. GTP is bound by residues histidine 228 and glutamate 271–asparagine 272. A G5 region spans residues glutamate 271–serine 273. A helical transmembrane segment spans residues leucine 329 to leucine 349. The short motif at aspartate 350–arginine 358 is the AKR2A-binding sequence (ABS) required for chloroplast outer envelope membrane targeting element.

It belongs to the TRAFAC class TrmE-Era-EngA-EngB-Septin-like GTPase superfamily. AIG1/Toc34/Toc159-like paraseptin GTPase family. TOC34 subfamily. As to quaternary structure, homodimer, heterodimer with other TOC proteins, and monomer. Part of the TOC core complex that includes 1 protein for the specific recognition of transit peptides surrounded by a ring composed of four proteins forming translocation channels, and four to five GTP-binding proteins providing energy. This core complex can interact with components of the TIC complex to form a larger import complex. Interacts with ARSA1. It depends on Mg(2+) as a cofactor.

Its subcellular location is the plastid. The protein localises to the chloroplast outer membrane. GTPase involved in protein precursor import into chloroplasts. Seems to recognize chloroplast-destined precursor proteins and regulate their presentation to the translocation channel through GTP hydrolysis. Functions as an essential component of the outer chloroplast membrane translocon (TOC) complex, which, in turn, catalyzes the import of nucleus-encoded precursor polypeptides from the cytoplasm to the chloroplast. The sequence is that of Translocase of chloroplast 34 homolog, chloroplastic from Chlamydomonas reinhardtii (Chlamydomonas smithii).